A 485-amino-acid chain; its full sequence is Glutamyl-tRNA(Gln) amidotransferase subunit A (485 aa).

Residues Lys-78 and Ser-153 each act as charge relay system in the active site. Ser-177 acts as the Acyl-ester intermediate in catalysis.

Belongs to the amidase family. GatA subfamily. In terms of assembly, heterotrimer of A, B and C subunits.

The catalysed reaction is L-glutamyl-tRNA(Gln) + L-glutamine + ATP + H2O = L-glutaminyl-tRNA(Gln) + L-glutamate + ADP + phosphate + H(+). Functionally, allows the formation of correctly charged Gln-tRNA(Gln) through the transamidation of misacylated Glu-tRNA(Gln) in organisms which lack glutaminyl-tRNA synthetase. The reaction takes place in the presence of glutamine and ATP through an activated gamma-phospho-Glu-tRNA(Gln). The protein is Glutamyl-tRNA(Gln) amidotransferase subunit A of Bacillus cereus (strain AH820).